We begin with the raw amino-acid sequence, 208 residues long: Protein disulfide-isomerase A3 (208 aa).

One can recognise a Thioredoxin 1 domain in the interval 1–44 (RLAPEYEAAATRYGVSGYPTLKDGEEAGAYDGPRTADGIVSHLK). The residue at position 44 (K44) is an N6-succinyllysine. An N6-acetyllysine modification is found at K49. Phosphothreonine is present on T133. The Thioredoxin 2 domain maps to 151-208 (SRFLQDYFDGNLKRYLKSEPIPETNDGPVKMDATANDVPSPYEVKGFPTIYFSPANKK). K163 carries the N6-acetyllysine modification.

It belongs to the protein disulfide isomerase family. In terms of assembly, part of the major histocompatibility complex class I (MHC I) peptide loading complex composed of TAP1, TAP2, B2M, MHC heavy chain, TAPBP, PDIA3, and CALR. Interacts with ERP27 and CANX. Interacts with SERPINA2 and SERPINA1. Interacts with ATP2A2. Within the major histocompatibility complex class I (MHC I) peptide loading complex forms reversible disulfide-linked heterodimers with TAPBP as part of its protein folding chaperone activity. This is essential to assist the dynamic assembly of the MHC I complex with high affinity antigens in the endoplasmic reticulum. In terms of processing, phosphorylated. In the caput epididymal spermatozoa, detected in the mid-peice and at low levels in the principal piece. In the cauda epididymal spermatozoa, detected at very low levels in the principal piece and not in the mid-piece (at protein level).

It localises to the endoplasmic reticulum. The protein resides in the endoplasmic reticulum lumen. Its subcellular location is the melanosome. The enzyme catalyses Catalyzes the rearrangement of -S-S- bonds in proteins.. Functionally, protein disulfide isomerase that catalyzes the formation, isomerization, and reduction or oxidation of disulfide bonds in client proteins and functions as a protein folding chaperone. Core component of the major histocompatibility complex class I (MHC I) peptide loading complex where it functions as an essential folding chaperone for TAPBP. Through TAPBP, assists the dynamic assembly of the MHC I complex with high affinity antigens in the endoplasmic reticulum. Therefore, plays a crucial role in the presentation of antigens to cytotoxic T cells in adaptive immunity. The chain is Protein disulfide-isomerase A3 from Mesocricetus auratus (Golden hamster).